Consider the following 73-residue polypeptide: DNA-binding protein S1FA3 (73 aa).

Positions 47–52 (PPRKKK) match the Nuclear localization signal motif. Residues 47–63 (PPRKKKPVSKKKMKKEK) show a composition bias toward basic residues. The interval 47-73 (PPRKKKPVSKKKMKKEKMKQGVQVPGE) is disordered.

It belongs to the S1FA transcription factor family.

It localises to the nucleus. Its function is as follows. DNA-binding protein that specifically recognizes a negative element (S1F) within the RPS1 promoter. The chain is DNA-binding protein S1FA3 (S1FA3) from Arabidopsis thaliana (Mouse-ear cress).